The following is a 294-amino-acid chain: Movement protein (294 aa).

Interacts with nucleoprotein.

In terms of biological role, transports viral genome to neighboring plant cells directly through plasmosdesmata, without any budding. The movement protein allows efficient cell to cell propagation, by bypassing the host cell wall barrier. Displays an RNA-binding activity. This chain is Movement protein (3), found in Rice yellow stunt virus (RYSV).